Consider the following 184-residue polypeptide: TATA-box-binding protein (184 aa).

A run of 2 repeats spans residues 9 to 85 and 100 to 178.

It belongs to the TBP family.

Its function is as follows. General factor that plays a role in the activation of archaeal genes transcribed by RNA polymerase. Binds specifically to the TATA box promoter element which lies close to the position of transcription initiation. This Thermoplasma volcanium (strain ATCC 51530 / DSM 4299 / JCM 9571 / NBRC 15438 / GSS1) protein is TATA-box-binding protein.